The primary structure comprises 140 residues: ATP synthase epsilon chain (140 aa).

This sequence belongs to the ATPase epsilon chain family. F-type ATPases have 2 components, CF(1) - the catalytic core - and CF(0) - the membrane proton channel. CF(1) has five subunits: alpha(3), beta(3), gamma(1), delta(1), epsilon(1). CF(0) has three main subunits: a, b and c.

It is found in the cell inner membrane. Its function is as follows. Produces ATP from ADP in the presence of a proton gradient across the membrane. The polypeptide is ATP synthase epsilon chain (Vibrio vulnificus (strain CMCP6)).